Here is a 397-residue protein sequence, read N- to C-terminus: Acetate kinase (397 aa).

Mg(2+) is bound at residue N7. K14 is a binding site for ATP. Substrate is bound at residue R90. Catalysis depends on D147, which acts as the Proton donor/acceptor. Residues 207–211 (HLGNG), 282–284 (DFR), and 330–334 (GLGEN) contribute to the ATP site. A Mg(2+)-binding site is contributed by E383.

It belongs to the acetokinase family. Homodimer. Mg(2+) is required as a cofactor. Mn(2+) serves as cofactor.

The protein resides in the cytoplasm. The catalysed reaction is acetate + ATP = acetyl phosphate + ADP. The protein operates within metabolic intermediate biosynthesis; acetyl-CoA biosynthesis; acetyl-CoA from acetate: step 1/2. In terms of biological role, catalyzes the formation of acetyl phosphate from acetate and ATP. Can also catalyze the reverse reaction. This Clostridium botulinum (strain ATCC 19397 / Type A) protein is Acetate kinase.